We begin with the raw amino-acid sequence, 649 residues long: MAFNTAMASTSPAAANDVLREHIGLRRSLSGQDLVLKGGGIRRSSSDNHLCCRSGNNNNRILAVSVRPGMKTSRSVGVFSFQISSSIIPSPIKTLLFETDTSQDEQESDEIEIETEPNLDGAKKANWVERLLEIRRQWKREQKTESGNSDVAEESVDVTCGCEEEEGCIANYGSVNGDWGRESFSRLLVKVSWSEAKKLSQLAYLCNLAYTIPEIKGEDLRRNYGLKFVTSSLEKKAKAAILREKLEQDPTHVPVITSPDLESEKQSQRSASSSASAYKIAASAASYIHSCKEYDLSEPIYKSAAAAQAAASTMTAVVAAGEEEKLEAARELQSLQSSPCEWFVCDDPNTYTRCFVIQGSDSLASWKANLFFEPTKFEDTDVLVHRGIYEAAKGIYEQFLPEITEHLSRHGDRAKFQFTGHSLGGSLSLIVNLMLISRGLVSSEAMKSVVTFGSPFVFCGGEKILAELGLDESHVHCVMMHRDIVPRAFSCNYPDHVALVLKRLNGSFRTHPCLNKNKLLYSPMGKVYILQPSESVSPTHPWLPPGNALYILENSNEGYSPTALRAFLNRPHPLETLSQRAAYGSEGSVLRDHDSKNYVKAVNGVLRQHTKLIVRKARIQRRSVWPVLTSAGRGLNESLTTAEEIMTRV.

The N-terminal 67 residues, 1 to 67, are a transit peptide targeting the chloroplast; that stretch reads MAFNTAMAST…NNRILAVSVR (67 aa). Residues 420-424 carry the GXSXG motif; that stretch reads GHSLG. Ser-422 functions as the Acyl-ester intermediate in the catalytic mechanism. Residues Asp-483 and His-593 each act as charge relay system in the active site.

Belongs to the AB hydrolase superfamily. Lipase family.

The protein localises to the plastid. It localises to the chloroplast thylakoid membrane. It carries out the reaction a 1,2-diacyl-sn-glycero-3-phosphocholine + H2O = a 2-acyl-sn-glycero-3-phosphocholine + a fatty acid + H(+). The enzyme catalyses a 1,2-diacyl-3-O-(beta-D-galactosyl)-sn-glycerol + 2 H2O = 3-beta-D-galactosyl-sn-glycerol + 2 a fatty acid + 2 H(+). Functionally, sn-1-specific phospholipase A1 involved in seed oil biosynthesis. Hydrolyzes polyunsaturated acyl groups from a unique chloroplast-specific phosphatidylglycerol (PG) that contains 16:1 delta 3-trans as its second acyl group. The polyunsaturated acyl groups released by PLIP1 are exported from the chloroplast, reincorporated into phosphatidylcholine (PC), and ultimately enter seed triacylglycerol (TAG). In vitro, possesses broad substrate specificity. Can hydrolyze the galactolipid monogalactosyldiacylglycerol (MGDG), and the phoshpolipids phosphatidylcholine (PC), phosphatidylethanolamine (PE), phosphatidic acid (PA), phosphatidylserine (PS) phosphatidylglycerol (PG) and phosphatidylinositol (PI). The chain is Phospholipase A1 PLIP1, chloroplastic from Arabidopsis thaliana (Mouse-ear cress).